A 223-amino-acid polypeptide reads, in one-letter code: MSQTCQTGYAYMQPFVQIIPSNLSLACGLRILRAEDYQSSLTTEELISAAKQDAEKILADAQEVYEQQKQLGWQAGMDEARTLQATLIHETQLQCQQFYRHVEQQMSEVVLLAVRKILNDYDQVDMTLQVVREALALVSNQKQVVVRVNPDQAGTIREQIAKVHKDFPEISYLEVTADARLDQGGCILETEVGIIDASIDGQIEALSRAISTTLGQMKVTEEE.

This sequence belongs to the SctL stator family. In terms of assembly, the core secretion machinery of the T3SS is composed of approximately 20 different proteins, including cytoplasmic components, a base, an export apparatus and a needle. This subunit is part of the cytosolic complex. Interacts directly with YscN/SctN (T3SS ATPase) and YscQ/SctQ (the major sorting platform component). Forms homodimers.

The protein localises to the cytoplasm. In terms of biological role, component of the type III secretion system (T3SS), also called injectisome, which is used to inject bacterial effector proteins into eukaryotic host cells. Acts as a regulator of the YscN/SctN ATPase activity. Overexpression of YscL/SctL abolishes type III secretion and down-regulates the expression of secretion apparatus components. The chain is Type 3 secretion system stator protein from Yersinia enterocolitica.